The chain runs to 125 residues: Probable growth factor FPV211 (125 aa).

An N-terminal signal peptide occupies residues Met1–Leu48. The EGF-like domain occupies Leu80–Asp120. Cystine bridges form between Cys84–Cys97, Cys92–Cys108, and Cys110–Cys119.

The protein localises to the secreted. The protein is Probable growth factor FPV211 of Vertebrata (FPV).